A 397-amino-acid polypeptide reads, in one-letter code: Subtilisin-like protease 3 (397 aa).

Residues 1–19 form the signal peptide; that stretch reads MGCIKVISVFLAAVAAVDA. Positions 20 to 116 are excised as a propeptide; it reads RAFFHNRGGN…VEHDRVVKLA (97 aa). The 82-residue stretch at 35-116 folds into the Inhibitor I9 domain; the sequence is SYIVVMKDGV…VEHDRVVKLA (82 aa). Positions 126 to 397 constitute a Peptidase S8 domain; that stretch reads TWGLGRVSHK…NKLLYNGSGR (272 aa). Catalysis depends on charge relay system residues Asp158 and His189. Asn250 carries an N-linked (GlcNAc...) asparagine glycan. Ser344 (charge relay system) is an active-site residue. The N-linked (GlcNAc...) asparagine glycan is linked to Asn393.

This sequence belongs to the peptidase S8 family.

The protein resides in the secreted. Its function is as follows. Secreted subtilisin-like serine protease with keratinolytic activity that contributes to pathogenicity. This chain is Subtilisin-like protease 3 (SUB3), found in Arthroderma otae (strain ATCC MYA-4605 / CBS 113480) (Microsporum canis).